The chain runs to 249 residues: 3-deoxy-manno-octulosonate cytidylyltransferase (249 aa).

It belongs to the KdsB family.

Its subcellular location is the cytoplasm. The enzyme catalyses 3-deoxy-alpha-D-manno-oct-2-ulosonate + CTP = CMP-3-deoxy-beta-D-manno-octulosonate + diphosphate. Its pathway is nucleotide-sugar biosynthesis; CMP-3-deoxy-D-manno-octulosonate biosynthesis; CMP-3-deoxy-D-manno-octulosonate from 3-deoxy-D-manno-octulosonate and CTP: step 1/1. The protein operates within bacterial outer membrane biogenesis; lipopolysaccharide biosynthesis. In terms of biological role, activates KDO (a required 8-carbon sugar) for incorporation into bacterial lipopolysaccharide in Gram-negative bacteria. This Aliivibrio salmonicida (strain LFI1238) (Vibrio salmonicida (strain LFI1238)) protein is 3-deoxy-manno-octulosonate cytidylyltransferase.